The sequence spans 119 residues: Large ribosomal subunit protein P3z (119 aa).

Residues alanine 79–glycine 90 are compositionally biased toward gly residues. The interval alanine 79–glycine 119 is disordered. The segment covering proline 96–glutamate 105 has biased composition (basic and acidic residues).

The protein belongs to the eukaryotic ribosomal protein P1/P2 family. Post-translationally, phosphorylated.

In terms of biological role, plays an important role in the elongation step of protein synthesis. The protein is Large ribosomal subunit protein P3z (RPP3A) of Arabidopsis thaliana (Mouse-ear cress).